A 62-amino-acid polypeptide reads, in one-letter code: Cytotoxin-like basic protein (62 aa).

Intrachain disulfides connect cysteine 3/cysteine 22, cysteine 15/cysteine 40, cysteine 44/cysteine 55, and cysteine 56/cysteine 61.

This sequence belongs to the three-finger toxin family. Short-chain subfamily. Orphan group XV sub-subfamily. Expressed by the venom gland.

The protein resides in the secreted. It is found in the target cell membrane. Its function is as follows. Has low cytotoxic activity. This chain is Cytotoxin-like basic protein, found in Naja naja (Indian cobra).